The sequence spans 269 residues: tRNA (guanine-N(7)-)-methyltransferase (269 aa).

Residues 1–38 (MDGVNDAANHTVESVPGRPSTASAPLEAGRRSPTGSRL) form a disordered region. 4 residues coordinate S-adenosyl-L-methionine: Glu91, Glu116, Asp143, and Asp166. Asp166 is a catalytic residue. Residues Lys170, Asp202, and 247 to 250 (TKFE) contribute to the substrate site.

Belongs to the class I-like SAM-binding methyltransferase superfamily. TrmB family.

It carries out the reaction guanosine(46) in tRNA + S-adenosyl-L-methionine = N(7)-methylguanosine(46) in tRNA + S-adenosyl-L-homocysteine. The protein operates within tRNA modification; N(7)-methylguanine-tRNA biosynthesis. Functionally, catalyzes the formation of N(7)-methylguanine at position 46 (m7G46) in tRNA. This Nocardia farcinica (strain IFM 10152) protein is tRNA (guanine-N(7)-)-methyltransferase.